Here is a 174-residue protein sequence, read N- to C-terminus: Superoxide dismutase [Cu-Zn] (174 aa).

An N-terminal signal peptide occupies residues 1-20 (MMKSLFIASTMVLMAFPAFA). Positions 68, 70, and 93 each coordinate Cu cation. A disulfide bridge links C75 with C170. Residues H93, H102, H110, and D113 each coordinate Zn(2+). Position 148 (H148) interacts with Cu cation.

This sequence belongs to the Cu-Zn superoxide dismutase family. As to quaternary structure, homodimer. It depends on Cu cation as a cofactor. Zn(2+) serves as cofactor.

Its subcellular location is the periplasm. The catalysed reaction is 2 superoxide + 2 H(+) = H2O2 + O2. Its function is as follows. Destroys radicals which are normally produced within the cells and which are toxic to biological systems. In Brucella melitensis biotype 1 (strain ATCC 23456 / CCUG 17765 / NCTC 10094 / 16M), this protein is Superoxide dismutase [Cu-Zn] (sodC).